The chain runs to 86 residues: Large ribosomal subunit protein bL27 (86 aa).

Residues 1–26 are disordered; that stretch reads MASKKAGGSTKNGRDSQSKRLGVKRF.

Belongs to the bacterial ribosomal protein bL27 family.

The chain is Large ribosomal subunit protein bL27 from Bdellovibrio bacteriovorus (strain ATCC 15356 / DSM 50701 / NCIMB 9529 / HD100).